The sequence spans 217 residues: GTP cyclohydrolase 1 (217 aa).

Residues Cys-109, His-112, and Cys-180 each contribute to the Zn(2+) site.

It belongs to the GTP cyclohydrolase I family. In terms of assembly, toroid-shaped homodecamer, composed of two pentamers of five dimers.

It carries out the reaction GTP + H2O = 7,8-dihydroneopterin 3'-triphosphate + formate + H(+). Its pathway is cofactor biosynthesis; 7,8-dihydroneopterin triphosphate biosynthesis; 7,8-dihydroneopterin triphosphate from GTP: step 1/1. This Vibrio parahaemolyticus serotype O3:K6 (strain RIMD 2210633) protein is GTP cyclohydrolase 1.